The sequence spans 90 residues: Long neurotoxin OH-34 (90 aa).

The N-terminal stretch at 1 to 20 (KTLLLTLVVVTILCLDLGYT) is a signal peptide. 5 cysteine pairs are disulfide-bonded: C23–C41, C34–C62, C47–C51, C66–C77, and C78–C83.

It belongs to the three-finger toxin family. Long-chain subfamily. Type II alpha-neurotoxin sub-subfamily. In terms of tissue distribution, expressed by the venom gland.

It localises to the secreted. In terms of biological role, binds with high affinity to muscular (alpha-1/CHRNA1) and neuronal (alpha-7/CHRNA7) nicotinic acetylcholine receptor (nAChR) and inhibits acetylcholine from binding to the receptor, thereby impairing neuromuscular and neuronal transmission. This is Long neurotoxin OH-34 from Ophiophagus hannah (King cobra).